We begin with the raw amino-acid sequence, 318 residues long: Large ribosomal subunit protein uL10 (318 aa).

Tyr24 bears the Phosphotyrosine mark. At Thr59 the chain carries Phosphothreonine. Lys264 is covalently cross-linked (Glycyl lysine isopeptide (Lys-Gly) (interchain with G-Cter in ubiquitin)). A Glycyl lysine isopeptide (Lys-Gly) (interchain with G-Cter in SUMO1); alternate cross-link involves residue Lys298. Lys298 participates in a covalent cross-link: Glycyl lysine isopeptide (Lys-Gly) (interchain with G-Cter in SUMO2); alternate. The tract at residues 298–318 (KVEAKEESEESDEDMGFGLFD) is disordered. A compositionally biased stretch (acidic residues) spans 303 to 312 (EESEESDEDM). Phosphoserine is present on residues Ser305 and Ser308.

This sequence belongs to the universal ribosomal protein uL10 family. As to quaternary structure, P0 forms a pentameric complex by interaction with dimers of P1 and P2. Identified in a IGF2BP1-dependent mRNP granule complex containing untranslated mRNAs. Interacts with APEX1. Interacts with FMR1 isoform 6. Post-translationally, ubiquitinated at Lys-264 by RNF14 and RNF25 in response to ribosome collisions (ribosome stalling).

It is found in the nucleus. Its subcellular location is the cytoplasm. Ribosomal protein P0 is the functional equivalent of E.coli protein L10. This Oryctolagus cuniculus (Rabbit) protein is Large ribosomal subunit protein uL10 (RPLP0).